Consider the following 182-residue polypeptide: Ribosome maturation factor RimP (182 aa).

It belongs to the RimP family.

Its subcellular location is the cytoplasm. Its function is as follows. Required for maturation of 30S ribosomal subunits. In Corynebacterium efficiens (strain DSM 44549 / YS-314 / AJ 12310 / JCM 11189 / NBRC 100395), this protein is Ribosome maturation factor RimP.